Here is a 305-residue protein sequence, read N- to C-terminus: Glycine--tRNA ligase alpha subunit (305 aa).

The protein belongs to the class-II aminoacyl-tRNA synthetase family. Tetramer of two alpha and two beta subunits.

It localises to the cytoplasm. It catalyses the reaction tRNA(Gly) + glycine + ATP = glycyl-tRNA(Gly) + AMP + diphosphate. The protein is Glycine--tRNA ligase alpha subunit of Streptococcus pneumoniae (strain ATCC 700669 / Spain 23F-1).